We begin with the raw amino-acid sequence, 266 residues long: Zinc transporter ZupT (266 aa).

Transmembrane regions (helical) follow at residues 8 to 28 (LLLTLLAGLSTGIGSAMALAV), 36 to 56 (LALSLGFSAGIMLYVSFMEII), 71 to 91 (AGAWVSTISFFGGMLFTWAID), 123 to 143 (GIFTAAAIAIHNFPEGMAVFF), 152 to 172 (GIVIASTIALHNIPEGMAVAV), 185 to 205 (FSLSFLSGLAEPLGALVGYTL), 209 to 229 (FLTPFVLGIVLASVSGIMVYI), and 246 to 266 (LAITGLIAGMAVMALSLLLLT). Fe(2+) is bound by residues N134 and E137. Zn(2+)-binding residues include E137 and H162. Positions 163, 166, and 195 each coordinate Fe(2+). E166 is a Zn(2+) binding site.

It belongs to the ZIP transporter (TC 2.A.5) family. ZupT subfamily.

Its subcellular location is the cell inner membrane. The enzyme catalyses Zn(2+)(in) = Zn(2+)(out). Mediates zinc uptake. May also transport other divalent cations. The protein is Zinc transporter ZupT of Chlorobium luteolum (strain DSM 273 / BCRC 81028 / 2530) (Pelodictyon luteolum).